The following is a 647-amino-acid chain: 1-deoxy-D-xylulose-5-phosphate synthase (647 aa).

Residues H72 and 113 to 115 each bind thiamine diphosphate; that span reads GHA. Residue D144 coordinates Mg(2+). Thiamine diphosphate is bound by residues 145–146, N174, Y287, and E370; that span reads GA. N174 contributes to the Mg(2+) binding site.

It belongs to the transketolase family. DXPS subfamily. In terms of assembly, homodimer. Mg(2+) is required as a cofactor. The cofactor is thiamine diphosphate.

It carries out the reaction D-glyceraldehyde 3-phosphate + pyruvate + H(+) = 1-deoxy-D-xylulose 5-phosphate + CO2. It functions in the pathway metabolic intermediate biosynthesis; 1-deoxy-D-xylulose 5-phosphate biosynthesis; 1-deoxy-D-xylulose 5-phosphate from D-glyceraldehyde 3-phosphate and pyruvate: step 1/1. In terms of biological role, catalyzes the acyloin condensation reaction between C atoms 2 and 3 of pyruvate and glyceraldehyde 3-phosphate to yield 1-deoxy-D-xylulose-5-phosphate (DXP). This is 1-deoxy-D-xylulose-5-phosphate synthase from Synechococcus sp. (strain WH7803).